A 313-amino-acid chain; its full sequence is Aspartate carbamoyltransferase catalytic subunit (313 aa).

2 residues coordinate carbamoyl phosphate: Arg58 and Thr59. Residue Lys86 participates in L-aspartate binding. Carbamoyl phosphate is bound by residues Arg108, His136, and Gln139. The L-aspartate site is built by Arg169 and Arg223. Positions 264 and 265 each coordinate carbamoyl phosphate.

It belongs to the aspartate/ornithine carbamoyltransferase superfamily. ATCase family. Heterododecamer (2C3:3R2) of six catalytic PyrB chains organized as two trimers (C3), and six regulatory PyrI chains organized as three dimers (R2).

The catalysed reaction is carbamoyl phosphate + L-aspartate = N-carbamoyl-L-aspartate + phosphate + H(+). The protein operates within pyrimidine metabolism; UMP biosynthesis via de novo pathway; (S)-dihydroorotate from bicarbonate: step 2/3. Catalyzes the condensation of carbamoyl phosphate and aspartate to form carbamoyl aspartate and inorganic phosphate, the committed step in the de novo pyrimidine nucleotide biosynthesis pathway. In Chlorobium luteolum (strain DSM 273 / BCRC 81028 / 2530) (Pelodictyon luteolum), this protein is Aspartate carbamoyltransferase catalytic subunit.